We begin with the raw amino-acid sequence, 317 residues long: Phospholipase A1 1 (317 aa).

The N-terminal stretch at 1-7 (RLIMFVG) is a signal peptide. Residues 8 to 17 (DPSSSNELDR) constitute a propeptide that is removed on maturation. The cysteines at positions 21 and 104 are disulfide-linked. The N-linked (GlcNAc...) asparagine glycan is linked to N25. The Nucleophile role is filled by S154. D182 acts as the Charge relay system in catalysis. Residues C193 and C198 are joined by a disulfide bond. The N-linked (GlcNAc...) asparagine glycan is linked to N229. C236 and C244 are oxidised to a cystine. H246 (charge relay system) is an active-site residue. 3 cysteine pairs are disulfide-bonded: C261/C285, C262/C310, and C278/C283.

This sequence belongs to the AB hydrolase superfamily. Lipase family. Expressed by the venom gland.

It is found in the secreted. The enzyme catalyses a 1,2-diacyl-sn-glycero-3-phosphocholine + H2O = a 2-acyl-sn-glycero-3-phosphocholine + a fatty acid + H(+). Functionally, catalyzes the hydrolysis of phosphatidylcholine with phospholipase A1 activity. May act as an allergen and induce hemolytic activity. This Dolichovespula maculata (Bald-faced hornet) protein is Phospholipase A1 1.